The chain runs to 752 residues: Palmitoyltransferase AKR1 (752 aa).

Disordered stretches follow at residues 1–21 and 49–68; these read MTAE…KSDY and ASSE…LGSV. Residues 1–318 lie on the Cytoplasmic side of the membrane; it reads MTAEEVDKES…FPLPQYFSAS (318 aa). Basic and acidic residues-rich tracts occupy residues 9 to 21 and 51 to 68; these read ESDP…KSDY and SELK…LGSV. 6 ANK repeats span residues 72 to 102, 108 to 137, 142 to 171, 175 to 208, 212 to 241, and 245 to 274; these read PILE…DLSN, ERVS…EVNF, LDAT…DPNI, QGYN…DVDQ, HQRT…DVKN, and AGFT…DFFQ. A helical membrane pass occupies residues 319–339; that stretch reads TGKMLTFFLPWVLIPLVFYIF. The Lumenal segment spans residues 340-341; that stretch reads SK. The chain crosses the membrane as a helical span at residues 342–362; it reads ITFFIALLINTIVLVISGLVL. Over 363–380 the chain is Cytoplasmic; it reads SRLVVPSYLLSKRHPILN. Residues 381 to 401 form a helical membrane-spanning segment; it reads SPLLAGILSGTIAIAFFIWFT. At 402–412 the chain is on the lumenal side; sequence KISILTFTEKP. Residues 413–433 traverse the membrane as a helical segment; that stretch reads VGNIIMLGFFIGLITLFIGLM. Over 434–509 the chain is Cytoplasmic; that stretch reads KSDPGYIPGT…YNQIGLLNHK (76 aa). A DHHC domain is found at 466–516; that stretch reads HFCVHTWIRIPLRSKYDRDSACLISAFDHFCPWVYNQIGLLNHKLFYMFVV. Residue cysteine 496 is the S-palmitoyl cysteine intermediate of the active site. The chain crosses the membrane as a helical span at residues 510–530; sequence LFYMFVVLLEISVWWFLPLMM. The Lumenal portion of the chain corresponds to 531-567; sequence EYFDELEDYLENRKGKHFGDCHFLGDEDLCFGLHHDT. Residues 568-588 traverse the membrane as a helical segment; it reads FNFLLLCWVIFQAFWVLCLIA. The Cytoplasmic portion of the chain corresponds to 589 to 752; sequence VQTVQMLKGV…TLPNATEELV (164 aa).

It belongs to the DHHC palmitoyltransferase family. AKR/ZDHHC17 subfamily.

The protein resides in the early endosome membrane. It is found in the golgi apparatus membrane. The catalysed reaction is L-cysteinyl-[protein] + hexadecanoyl-CoA = S-hexadecanoyl-L-cysteinyl-[protein] + CoA. Palmitoyltransferase specific for casein kinase 1. The polypeptide is Palmitoyltransferase AKR1 (AKR1) (Kluyveromyces lactis (strain ATCC 8585 / CBS 2359 / DSM 70799 / NBRC 1267 / NRRL Y-1140 / WM37) (Yeast)).